The sequence spans 318 residues: uncharacterized protein (318 aa).

Belongs to the NAD(P)-dependent epimerase/dehydratase family.

This is an uncharacterized protein from Staphylococcus haemolyticus (strain JCSC1435).